The sequence spans 432 residues: 3-phosphoshikimate 1-carboxyvinyltransferase (432 aa).

3-phosphoshikimate contacts are provided by Lys23, Ser24, and Arg28. Position 23 (Lys23) interacts with phosphoenolpyruvate. The phosphoenolpyruvate site is built by Gly95 and Arg123. 3-phosphoshikimate contacts are provided by Ser167, Gln169, Asp317, and Lys344. Gln169 contacts phosphoenolpyruvate. The Proton acceptor role is filled by Asp317. Arg348 and Arg390 together coordinate phosphoenolpyruvate.

This sequence belongs to the EPSP synthase family. Monomer.

It is found in the cytoplasm. The catalysed reaction is 3-phosphoshikimate + phosphoenolpyruvate = 5-O-(1-carboxyvinyl)-3-phosphoshikimate + phosphate. The protein operates within metabolic intermediate biosynthesis; chorismate biosynthesis; chorismate from D-erythrose 4-phosphate and phosphoenolpyruvate: step 6/7. Its function is as follows. Catalyzes the transfer of the enolpyruvyl moiety of phosphoenolpyruvate (PEP) to the 5-hydroxyl of shikimate-3-phosphate (S3P) to produce enolpyruvyl shikimate-3-phosphate and inorganic phosphate. The polypeptide is 3-phosphoshikimate 1-carboxyvinyltransferase (Staphylococcus aureus (strain Newman)).